The sequence spans 147 residues: D-aminoacyl-tRNA deacylase (147 aa).

The short motif at 136–137 (GP) is the Gly-cisPro motif, important for rejection of L-amino acids element.

This sequence belongs to the DTD family. As to quaternary structure, homodimer.

The protein resides in the cytoplasm. The catalysed reaction is glycyl-tRNA(Ala) + H2O = tRNA(Ala) + glycine + H(+). The enzyme catalyses a D-aminoacyl-tRNA + H2O = a tRNA + a D-alpha-amino acid + H(+). Functionally, an aminoacyl-tRNA editing enzyme that deacylates mischarged D-aminoacyl-tRNAs. Also deacylates mischarged glycyl-tRNA(Ala), protecting cells against glycine mischarging by AlaRS. Acts via tRNA-based rather than protein-based catalysis; rejects L-amino acids rather than detecting D-amino acids in the active site. By recycling D-aminoacyl-tRNA to D-amino acids and free tRNA molecules, this enzyme counteracts the toxicity associated with the formation of D-aminoacyl-tRNA entities in vivo and helps enforce protein L-homochirality. The protein is D-aminoacyl-tRNA deacylase of Streptococcus pneumoniae serotype 4 (strain ATCC BAA-334 / TIGR4).